The sequence spans 289 residues: MWFQLKIEHCPNDKIEEITEELEECGALSITLTDKNDNPVLEPEPGTTPLWPEVIIHALFAQAEEAQYAREQLVAKRPSLHCSLELLADKNWERAWMDDFRPQRFGNRLWVCPTWLPPPEPDAVNLILDPGLAFGTGTHATTSLCLTWLEQADLKNKSIIDYGCGSGILSLAAIKLGAKHVYAVDIDNQALQATQSNAHANHITESQLSISSPEALQNPVHLVIANILLAPLISLKERFHQLLPSGAHLVTSGILEEQAPLLIDAYDSAFTHIATEYCEGWSLLVFTSK.

Positions 142, 163, 185, and 226 each coordinate S-adenosyl-L-methionine.

The protein belongs to the methyltransferase superfamily. PrmA family.

Its subcellular location is the cytoplasm. The enzyme catalyses L-lysyl-[protein] + 3 S-adenosyl-L-methionine = N(6),N(6),N(6)-trimethyl-L-lysyl-[protein] + 3 S-adenosyl-L-homocysteine + 3 H(+). In terms of biological role, methylates ribosomal protein L11. This chain is Ribosomal protein L11 methyltransferase, found in Legionella pneumophila (strain Lens).